The following is a 347-amino-acid chain: UDP-3-O-acylglucosamine N-acyltransferase (347 aa).

The active-site Proton acceptor is histidine 240.

Belongs to the transferase hexapeptide repeat family. LpxD subfamily. In terms of assembly, homotrimer.

The enzyme catalyses a UDP-3-O-[(3R)-3-hydroxyacyl]-alpha-D-glucosamine + a (3R)-hydroxyacyl-[ACP] = a UDP-2-N,3-O-bis[(3R)-3-hydroxyacyl]-alpha-D-glucosamine + holo-[ACP] + H(+). The protein operates within bacterial outer membrane biogenesis; LPS lipid A biosynthesis. Catalyzes the N-acylation of UDP-3-O-acylglucosamine using 3-hydroxyacyl-ACP as the acyl donor. Is involved in the biosynthesis of lipid A, a phosphorylated glycolipid that anchors the lipopolysaccharide to the outer membrane of the cell. This is UDP-3-O-acylglucosamine N-acyltransferase from Hydrogenovibrio crunogenus (strain DSM 25203 / XCL-2) (Thiomicrospira crunogena).